The sequence spans 720 residues: Dedicator of cytokinesis protein 9 (720 aa).

The DOCKER domain maps to 186 to 638; it reads KSYASTPELR…LSDIIVPRIC (453 aa). The interaction with CDC42 stretch occupies residues 277–638; it reads DEEASMMEDV…LSDIIVPRIC (362 aa).

It belongs to the DOCK family. Homodimer. Interacts preferentially with nucleotide-depleted CDC42.

Its subcellular location is the endomembrane system. Its function is as follows. Guanine nucleotide-exchange factor (GEF) that activates CDC42 by exchanging bound GDP for free GTP. Overexpression induces filopodia formation. The protein is Dedicator of cytokinesis protein 9 (Dock9) of Rattus norvegicus (Rat).